Here is a 293-residue protein sequence, read N- to C-terminus: Formamidopyrimidine-DNA glycosylase (293 aa).

The Schiff-base intermediate with DNA role is filled by Pro2. Residue Glu3 is the Proton donor of the active site. The Proton donor; for beta-elimination activity role is filled by Lys58. DNA is bound by residues His104, Arg123, and Lys166. The FPG-type zinc-finger motif lies at 257 to 293 (AVYDRESEPCRTKGCGGVVKRFVQNGRSTFCCPKCQK). The Proton donor; for delta-elimination activity role is filled by Arg283.

This sequence belongs to the FPG family. Monomer. It depends on Zn(2+) as a cofactor.

The enzyme catalyses Hydrolysis of DNA containing ring-opened 7-methylguanine residues, releasing 2,6-diamino-4-hydroxy-5-(N-methyl)formamidopyrimidine.. The catalysed reaction is 2'-deoxyribonucleotide-(2'-deoxyribose 5'-phosphate)-2'-deoxyribonucleotide-DNA = a 3'-end 2'-deoxyribonucleotide-(2,3-dehydro-2,3-deoxyribose 5'-phosphate)-DNA + a 5'-end 5'-phospho-2'-deoxyribonucleoside-DNA + H(+). Involved in base excision repair of DNA damaged by oxidation or by mutagenic agents. Acts as a DNA glycosylase that recognizes and removes damaged bases. Has a preference for oxidized purines, such as 7,8-dihydro-8-oxoguanine (8-oxoG). Has AP (apurinic/apyrimidinic) lyase activity and introduces nicks in the DNA strand. Cleaves the DNA backbone by beta-delta elimination to generate a single-strand break at the site of the removed base with both 3'- and 5'-phosphates. The chain is Formamidopyrimidine-DNA glycosylase from Rhodopseudomonas palustris (strain BisA53).